The primary structure comprises 824 residues: Probable ion channel POLLUX (824 aa).

Residues D45 to T54 show a composition bias toward low complexity. The segment at D45–P70 is disordered. 4 consecutive transmembrane segments (helical) span residues F81 to L101, A135 to L155, L198 to V218, and I250 to I270. RCK N-terminal domains are found at residues S291–V432 and P550–I699. Residues L325–G346 adopt a coiled-coil conformation.

This sequence belongs to the castor/pollux (TC 1.A.1.23) family.

The protein resides in the nucleus membrane. The chain is Probable ion channel POLLUX from Arabidopsis thaliana (Mouse-ear cress).